The primary structure comprises 422 residues: 4-hydroxy-3-methylbut-2-en-1-yl diphosphate synthase (flavodoxin) (422 aa).

[4Fe-4S] cluster is bound by residues Cys-316, Cys-319, Cys-362, and Glu-369.

It belongs to the IspG family. It depends on [4Fe-4S] cluster as a cofactor.

The catalysed reaction is (2E)-4-hydroxy-3-methylbut-2-enyl diphosphate + oxidized [flavodoxin] + H2O + 2 H(+) = 2-C-methyl-D-erythritol 2,4-cyclic diphosphate + reduced [flavodoxin]. The protein operates within isoprenoid biosynthesis; isopentenyl diphosphate biosynthesis via DXP pathway; isopentenyl diphosphate from 1-deoxy-D-xylulose 5-phosphate: step 5/6. Converts 2C-methyl-D-erythritol 2,4-cyclodiphosphate (ME-2,4cPP) into 1-hydroxy-2-methyl-2-(E)-butenyl 4-diphosphate. This is 4-hydroxy-3-methylbut-2-en-1-yl diphosphate synthase (flavodoxin) from Ehrlichia canis (strain Jake).